We begin with the raw amino-acid sequence, 177 residues long: dCTP deaminase, dUMP-forming (177 aa).

DCTP-binding positions include 98-103 (RSSVGR), asparagine 110, 115-118 (DPGF), 123-125 (TLE), glutamine 144, 157-160 (YQGK), and glutamine 164. The Proton donor/acceptor role is filled by glutamate 125.

It belongs to the dCTP deaminase family. In terms of assembly, homotrimer. It depends on Mg(2+) as a cofactor.

It catalyses the reaction dCTP + 2 H2O = dUMP + NH4(+) + diphosphate. It functions in the pathway pyrimidine metabolism; dUMP biosynthesis; dUMP from dCTP: step 1/1. Its activity is regulated as follows. Inhibited by dTTP. In terms of biological role, bifunctional enzyme that catalyzes both the deamination of dCTP to dUTP and the hydrolysis of dUTP to dUMP without releasing the toxic dUTP intermediate. This Halalkalibacterium halodurans (strain ATCC BAA-125 / DSM 18197 / FERM 7344 / JCM 9153 / C-125) (Bacillus halodurans) protein is dCTP deaminase, dUMP-forming.